A 245-amino-acid chain; its full sequence is Adenylate kinase (245 aa).

An ATP-binding site is contributed by 15 to 20 (GSGKGT). The NMP stretch occupies residues 35-64 (SSGDLLRDAVSKDTPLSQEIKSYLDQGKLL). Residues Ser-36, Arg-41, 62 to 64 (KLL), 103 to 106 (GFPR), and Gln-110 contribute to the AMP site. Residues 143-176 (SRYICPACQGIYNEQQGFSSCPKCSVELIRRSDD) are LID. Arg-144 contacts ATP. 2 residues coordinate Zn(2+): Cys-147 and Cys-150. 153 to 154 (IY) contributes to the ATP binding site. 2 residues coordinate Zn(2+): Cys-163 and Cys-166. The AMP site is built by Arg-173 and Arg-184. Ala-212 is an ATP binding site.

It belongs to the adenylate kinase family. As to quaternary structure, monomer.

Its subcellular location is the cytoplasm. It catalyses the reaction AMP + ATP = 2 ADP. It participates in purine metabolism; AMP biosynthesis via salvage pathway; AMP from ADP: step 1/1. In terms of biological role, catalyzes the reversible transfer of the terminal phosphate group between ATP and AMP. Plays an important role in cellular energy homeostasis and in adenine nucleotide metabolism. This is Adenylate kinase from Chlamydia trachomatis serovar A (strain ATCC VR-571B / DSM 19440 / HAR-13).